Consider the following 144-residue polypeptide: MFTLTQLCPTPLENARQLHLSLTAEERCRRRLHCHSDEGESLYLKLPRGITLQPGDRLRDEDATVIVTVHAKPEPTLKVMASTPLDLLRAAYHLGNRHVPLEIHTDYLRLGADSVVQTMLEQRGLTVTFEVAPFCPERGAYHAH.

Belongs to the UreE family.

It localises to the cytoplasm. Involved in urease metallocenter assembly. Binds nickel. Probably functions as a nickel donor during metallocenter assembly. In Thermosynechococcus vestitus (strain NIES-2133 / IAM M-273 / BP-1), this protein is Urease accessory protein UreE.